Consider the following 462-residue polypeptide: Transcript termination protein A18 (462 aa).

Residues 99–255 (KCKEKRPLYT…NSIINFIKFS (157 aa)) form the Helicase ATP-binding domain. 112–119 (LACGFGKT) serves as a coordination point for ATP. The short motif at 205–208 (DEAH) is the DEAH box element. Positions 308-459 (IVDKIIETFK…ATKLGFREVS (152 aa)) constitute a Helicase C-terminal domain.

It belongs to the helicase family. Poxviruses subfamily. Interacts with G2. Might be part of a transcription complex composed at least of G2, A18, and H5.

The protein resides in the virion. Its function is as follows. DNA helicase which seems to act as a postreplicative transcription termination factor. Involved in ATP-dependent release of nascent RNA. Forms a stable complex with single-stranded DNA, and to a lesser extent RNA. This Vertebrata (FPV) protein is Transcript termination protein A18.